We begin with the raw amino-acid sequence, 364 residues long: 4-hydroxythreonine-4-phosphate dehydrogenase (364 aa).

His-148 and Thr-149 together coordinate substrate. 3 residues coordinate a divalent metal cation: His-177, His-216, and His-301. Substrate is bound by residues Lys-309, Asn-318, and Arg-327.

The protein belongs to the PdxA family. As to quaternary structure, homodimer. Requires Zn(2+) as cofactor. It depends on Mg(2+) as a cofactor. The cofactor is Co(2+).

Its subcellular location is the cytoplasm. The enzyme catalyses 4-(phosphooxy)-L-threonine + NAD(+) = 3-amino-2-oxopropyl phosphate + CO2 + NADH. It functions in the pathway cofactor biosynthesis; pyridoxine 5'-phosphate biosynthesis; pyridoxine 5'-phosphate from D-erythrose 4-phosphate: step 4/5. Functionally, catalyzes the NAD(P)-dependent oxidation of 4-(phosphooxy)-L-threonine (HTP) into 2-amino-3-oxo-4-(phosphooxy)butyric acid which spontaneously decarboxylates to form 3-amino-2-oxopropyl phosphate (AHAP). The polypeptide is 4-hydroxythreonine-4-phosphate dehydrogenase (Campylobacter jejuni (strain RM1221)).